The chain runs to 620 residues: Sodium-dependent dopamine transporter (620 aa).

The Cytoplasmic portion of the chain corresponds to 1 to 56; sequence MSKSKCSVGLMSSVVAPAKEPNAVGPKEVELILVKEQNGVQLTSSTLTNPRQSPVE. Residues 57–95 traverse the membrane as a discontinuously helical segment; sequence AQDRETWGKKIDFLLSVIGFAVDLANVWRFPYLCYKNGG. Na(+) is bound by residues G75, A77, V78, D79, and N82. D79 lines the dopamine pocket. 2 helical membrane passes run 96–127 and 128–171; these read GAFLVPYLLFMVIAGMPLFYMELALGQFNREG and AAGV…FSSF. The dopamine site is built by S149 and G153. Residues 172–236 are Extracellular-facing; it reads TTELPWIHCN…SHGIDDLGPP (65 aa). A disulfide bridge links C180 with C189. Residues N181, N188, and N205 are each glycosylated (N-linked (GlcNAc...) asparagine). Helical transmembrane passes span 237–256 and 257–287; these read RWQLTACLVLVIVLLYFSLW and KGVKTSGKVVWITATMPYVVLTALLLRGVTL. Over 288–306 the chain is Extracellular; it reads PGAIDGIRAYLSVDFYRLC. The chain crosses the membrane as a discontinuously helical span at residues 307–335; the sequence is EASVWIDAATQVCFSLGVGFGVLIAFSSY. Q317 contacts chloride. A dopamine-binding site is contributed by F320. Na(+) contacts are provided by S321 and N353. Residue S321 coordinates chloride. The helical transmembrane segment at 336-376 threads the bilayer; sequence NKFTNNCYRDAIVTTSINSLTSFSSGFVVFSFLGYMAQKHS. Residue S357 coordinates chloride. The Extracellular portion of the chain corresponds to 377-400; the sequence is VPIGDVAKDGPGLIFIIYPEAIAT. 3 helical membrane-spanning segments follow: residues 401-442, 443-466, and 467-499; these read LPLS…QLLH, RHRELFTLFIVLATFLLSLFCVTN, and GGIYVFTLLDHFAAGTSILFGVLIEAIGVAWFY. 3 residues coordinate Na(+): L418, D421, and S422. Residues S422 and A423 each contribute to the dopamine site. Over 500–516 the chain is Cytoplasmic; sequence GVGQFSDDIQQMTGQRP. Residues 517-542 traverse the membrane as a helical segment; the sequence is SLYWRLCWKLVSPCFLLFVVVVSIVT. The Extracellular portion of the chain corresponds to 543–553; that stretch reads FRPPHYGAYIF. Residues 554–583 traverse the membrane as a helical segment; it reads PDWANALGWVIATSSMAMVPIYAAYKFCSL. The segment at 561 to 590 is interaction with TGFB1I1; the sequence is GWVIATSSMAMVPIYAAYKFCSLPGSFREK. Topologically, residues 584 to 620 are cytoplasmic; that stretch reads PGSFREKLAYAIAPEKDRELVDRGEVRQFTLRHWLKV.

Belongs to the sodium:neurotransmitter symporter (SNF) (TC 2.A.22) family. SLC6A3 subfamily. Monomer. Homooligomer; disulfide-linked. Interacts with PRKCABP and TGFB1I1. Interacts (via N-terminus) with SYNGR3 (via N-terminus). Interacts with SLC18A2. Interacts with TOR1A (ATP-bound); TOR1A regulates SLC6A3 subcellular location. Interacts with alpha-synuclein/SNCA. Interacts with SEPTIN4. In terms of tissue distribution, highly expressed in substantia nigra. Expressed in axonal varicosities in dopaminergic nerve terminals (at protein level). Expressed in the striatum (at protein level).

It localises to the cell membrane. The protein localises to the cell projection. Its subcellular location is the neuron projection. It is found in the axon. The catalysed reaction is dopamine(out) + chloride(out) + Na(+)(out) = dopamine(in) + chloride(in) + Na(+)(in). It carries out the reaction dopamine(out) + chloride(out) + 2 Na(+)(out) = dopamine(in) + chloride(in) + 2 Na(+)(in). It catalyses the reaction (R)-noradrenaline(out) + chloride(out) + Na(+)(out) = (R)-noradrenaline(in) + chloride(in) + Na(+)(in). Its activity is regulated as follows. Inhibited by cocaine, which occupies the same binding site as dopamine. Inhibited by zinc ions. Enhanced by the antibiotic valinomycin. Inhibited by benztropine. Inhibited by GBR 12909 dihydrochloride and amphetamine. Inhibited by mazindol, GBR 12783 dihydrochloride, nomifensine, diclofensine, amfonelic acid, Lu 19005, Win-35428, bupropion and ritalin. Its function is as follows. Mediates sodium- and chloride-dependent transport of dopamine. Also mediates sodium- and chloride-dependent transport of norepinephrine (also known as noradrenaline). Regulator of light-dependent retinal hyaloid vessel regression, downstream of OPN5 signaling. The protein is Sodium-dependent dopamine transporter (SLC6A3) of Homo sapiens (Human).